Reading from the N-terminus, the 182-residue chain is Ribosome-recycling factor (182 aa).

It belongs to the RRF family.

Its subcellular location is the cytoplasm. Functionally, responsible for the release of ribosomes from messenger RNA at the termination of protein biosynthesis. May increase the efficiency of translation by recycling ribosomes from one round of translation to another. In Synechococcus sp. (strain JA-2-3B'a(2-13)) (Cyanobacteria bacterium Yellowstone B-Prime), this protein is Ribosome-recycling factor.